A 368-amino-acid polypeptide reads, in one-letter code: Carbamoyl phosphate synthase small chain (368 aa).

The CPSase stretch occupies residues 1–178 (MKAVLGLEDG…GAAGAWKGSG (178 aa)). L-glutamine contacts are provided by serine 45, glycine 230, and glycine 232. The region spanning 182 to 368 (HAVVVDLGIK…KVVKVLGGGL (187 aa)) is the Glutamine amidotransferase type-1 domain. Cysteine 257 acts as the Nucleophile in catalysis. Residues phenylalanine 258, glutamine 261, asparagine 299, glycine 301, and tyrosine 302 each contribute to the L-glutamine site. Active-site residues include histidine 342 and glutamate 344.

This sequence belongs to the CarA family. In terms of assembly, composed of two chains; the small (or glutamine) chain promotes the hydrolysis of glutamine to ammonia, which is used by the large (or ammonia) chain to synthesize carbamoyl phosphate. Tetramer of heterodimers (alpha,beta)4.

The catalysed reaction is hydrogencarbonate + L-glutamine + 2 ATP + H2O = carbamoyl phosphate + L-glutamate + 2 ADP + phosphate + 2 H(+). The enzyme catalyses L-glutamine + H2O = L-glutamate + NH4(+). It functions in the pathway amino-acid biosynthesis; L-arginine biosynthesis; carbamoyl phosphate from bicarbonate: step 1/1. Its pathway is pyrimidine metabolism; UMP biosynthesis via de novo pathway; (S)-dihydroorotate from bicarbonate: step 1/3. Small subunit of the glutamine-dependent carbamoyl phosphate synthetase (CPSase). CPSase catalyzes the formation of carbamoyl phosphate from the ammonia moiety of glutamine, carbonate, and phosphate donated by ATP, constituting the first step of 2 biosynthetic pathways, one leading to arginine and/or urea and the other to pyrimidine nucleotides. The small subunit (glutamine amidotransferase) binds and cleaves glutamine to supply the large subunit with the substrate ammonia. This is Carbamoyl phosphate synthase small chain from Methanosarcina mazei (strain ATCC BAA-159 / DSM 3647 / Goe1 / Go1 / JCM 11833 / OCM 88) (Methanosarcina frisia).